The chain runs to 86 residues: Large ribosomal subunit protein uL23 (86 aa).

Belongs to the universal ribosomal protein uL23 family. Part of the 50S ribosomal subunit. Contacts protein L29.

Its function is as follows. Binds to 23S rRNA. One of the proteins that surrounds the polypeptide exit tunnel on the outside of the ribosome. The protein is Large ribosomal subunit protein uL23 of Thermococcus gammatolerans (strain DSM 15229 / JCM 11827 / EJ3).